The primary structure comprises 267 residues: Apolipoprotein A-I (267 aa).

Positions 1-18 (MKAAVLTLAVLFLTGSQA) are cleaved as a signal peptide. Repeat copies occupy residues 68-89 (LKLL…EQLG) and 90-111 (PVTQ…QEMS). The interval 68 to 267 (LKLLDNWDSV…EEYTKKLNTQ (200 aa)) is 10 X approximate tandem repeats. Met110 bears the Methionine sulfoxide mark. The 3; half-length repeat unit spans residues 112–122 (KDLEEVKAKVQ). Tandem repeats lie at residues 123 to 144 (PYLD…QKVE), 145 to 166 (PLRA…EKLS), 167 to 188 (PLGE…THLA), 189 to 210 (PYSD…ENGG), and 211 to 232 (ARLA…EKAK). Methionine sulfoxide is present on Met136. The 9; half-length repeat unit spans residues 233–243 (PALEDLRQGLL). Residues 244–267 (PVLESFKVSFLSALEEYTKKLNTQ) form repeat 10.

The protein belongs to the apolipoprotein A1/A4/E family. As to quaternary structure, homodimer. Interacts with APOA1BP and CLU. Component of a sperm activating protein complex (SPAP), consisting of APOA1, an immunoglobulin heavy chain, an immunoglobulin light chain and albumin. Interacts with NDRG1. Interacts with SCGB3A2. Interacts with NAXE and YJEFN3. In terms of processing, glycosylated. Palmitoylated. Post-translationally, phosphorylation sites are present in the extracellular medium. As to expression, major protein of plasma HDL, also found in chylomicrons.

Its subcellular location is the secreted. Participates in the reverse transport of cholesterol from tissues to the liver for excretion by promoting cholesterol efflux from tissues and by acting as a cofactor for the lecithin cholesterol acyltransferase (LCAT). As part of the SPAP complex, activates spermatozoa motility. This Pan troglodytes (Chimpanzee) protein is Apolipoprotein A-I (APOA1).